The primary structure comprises 232 residues: Demethylmenaquinone methyltransferase (232 aa).

S-adenosyl-L-methionine-binding positions include Thr-58, Asp-79, and 104-105 (NA).

The protein belongs to the class I-like SAM-binding methyltransferase superfamily. MenG/UbiE family.

The enzyme catalyses a 2-demethylmenaquinol + S-adenosyl-L-methionine = a menaquinol + S-adenosyl-L-homocysteine + H(+). It participates in quinol/quinone metabolism; menaquinone biosynthesis; menaquinol from 1,4-dihydroxy-2-naphthoate: step 2/2. Its function is as follows. Methyltransferase required for the conversion of demethylmenaquinol (DMKH2) to menaquinol (MKH2). The polypeptide is Demethylmenaquinone methyltransferase (Bacillus licheniformis (strain ATCC 14580 / DSM 13 / JCM 2505 / CCUG 7422 / NBRC 12200 / NCIMB 9375 / NCTC 10341 / NRRL NRS-1264 / Gibson 46)).